The sequence spans 374 residues: Quinolinate synthase (374 aa).

Residues His53 and Ser70 each contribute to the iminosuccinate site. Cys116 serves as a coordination point for [4Fe-4S] cluster. Residues 148-150 and Ser169 each bind iminosuccinate; that span reads YMN. Cys236 serves as a coordination point for [4Fe-4S] cluster. Iminosuccinate-binding positions include 262-264 and Thr279; that span reads HPE. Cys327 contributes to the [4Fe-4S] cluster binding site.

This sequence belongs to the quinolinate synthase family. Type 3 subfamily. [4Fe-4S] cluster serves as cofactor.

It is found in the cytoplasm. It carries out the reaction iminosuccinate + dihydroxyacetone phosphate = quinolinate + phosphate + 2 H2O + H(+). It functions in the pathway cofactor biosynthesis; NAD(+) biosynthesis; quinolinate from iminoaspartate: step 1/1. In terms of biological role, catalyzes the condensation of iminoaspartate with dihydroxyacetone phosphate to form quinolinate. The protein is Quinolinate synthase of Haloarcula marismortui (strain ATCC 43049 / DSM 3752 / JCM 8966 / VKM B-1809) (Halobacterium marismortui).